Consider the following 22-residue polypeptide: Heat shock 70-related protein 1, mitochondrial (22 aa).

This sequence belongs to the heat shock protein 70 family.

It localises to the mitochondrion. In Leishmania tarentolae (Sauroleishmania tarentolae), this protein is Heat shock 70-related protein 1, mitochondrial.